The sequence spans 430 residues: Serine hydroxymethyltransferase 2 (430 aa).

Residues L128 and 132 to 134 contribute to the (6S)-5,6,7,8-tetrahydrofolate site; that span reads GHL. Residue K237 is modified to N6-(pyridoxal phosphate)lysine.

The protein belongs to the SHMT family. Homodimer. Pyridoxal 5'-phosphate is required as a cofactor.

It localises to the cytoplasm. The enzyme catalyses (6R)-5,10-methylene-5,6,7,8-tetrahydrofolate + glycine + H2O = (6S)-5,6,7,8-tetrahydrofolate + L-serine. Its pathway is one-carbon metabolism; tetrahydrofolate interconversion. The protein operates within amino-acid biosynthesis; glycine biosynthesis; glycine from L-serine: step 1/1. Catalyzes the reversible interconversion of serine and glycine with tetrahydrofolate (THF) serving as the one-carbon carrier. This reaction serves as the major source of one-carbon groups required for the biosynthesis of purines, thymidylate, methionine, and other important biomolecules. Also exhibits THF-independent aldolase activity toward beta-hydroxyamino acids, producing glycine and aldehydes, via a retro-aldol mechanism. In Rhodospirillum rubrum (strain ATCC 11170 / ATH 1.1.1 / DSM 467 / LMG 4362 / NCIMB 8255 / S1), this protein is Serine hydroxymethyltransferase 2.